Here is a 1450-residue protein sequence, read N- to C-terminus: DNA-directed RNA polymerase RPB1 homolog (1450 aa).

It belongs to the RNA polymerase beta' chain family. In terms of assembly, part of the viral DNA-directed RNA polymerase that consists of 8 polII-like subunits (RPB1, RPB2, RPB3, RPB5, RPB6, RPB7, RPB9, RPB10), a capping enzyme and a termination factor.

The protein localises to the virion. The catalysed reaction is RNA(n) + a ribonucleoside 5'-triphosphate = RNA(n+1) + diphosphate. In terms of biological role, catalytic component of the DNA-directed RNA polymerase (RNAP) that catalyzes the transcription in the cytoplasm of viral DNA into RNA using the four ribonucleoside triphosphates as substrates. Forms the polymerase active center together with RPB2. Part of the core element with the central large cleft, the clamp element that moves to open and close the cleft and the jaws that are thought to grab the incoming DNA template. The sequence is that of DNA-directed RNA polymerase RPB1 homolog from African swine fever virus (strain Badajoz 1971 Vero-adapted) (Ba71V).